The chain runs to 262 residues: Putative hydro-lyase Sca_2211 (262 aa).

The protein belongs to the D-glutamate cyclase family.

In Staphylococcus carnosus (strain TM300), this protein is Putative hydro-lyase Sca_2211.